A 211-amino-acid polypeptide reads, in one-letter code: MPHGHSHDHGGCSHEASDVDHALEMGIEYSLYTKIDLDNVECLNEETDGQGKSVFKPYEKRQDLSKYVESDADEELLFNIPFTGNIKLKGIIISGANDDSHPNMVKIFKNRPRMTFDDARAKPDQEFQLTRDARGEIEYSPKVVTFSSVHHLSLYFPSNFGEDITRIYYIGLRGEFTEAHYHGVTICNYESRANAADHKEKAFDGVGRAIQ.

Residues 20-192 (DHALEMGIEY…GVTICNYESR (173 aa)) form the PITH domain.

The protein belongs to the PITHD1 family.

The sequence is that of PITH domain-containing protein CG6153 from Drosophila melanogaster (Fruit fly).